Here is a 215-residue protein sequence, read N- to C-terminus: Oligoribonuclease (215 aa).

Residues 5-170 enclose the Exonuclease domain; that stretch reads LVWIDCEMTG…ADIHESIREL (166 aa). Tyr127 is a catalytic residue. Residues 196–215 are disordered; the sequence is LDEGKDAPGPSDSASAPPTG. Residues 202-215 show a composition bias toward low complexity; that stretch reads APGPSDSASAPPTG.

Belongs to the oligoribonuclease family.

It localises to the cytoplasm. Its function is as follows. 3'-to-5' exoribonuclease specific for small oligoribonucleotides. This is Oligoribonuclease from Mycolicibacterium paratuberculosis (strain ATCC BAA-968 / K-10) (Mycobacterium paratuberculosis).